A 337-amino-acid chain; its full sequence is Fructose-1,6-bisphosphatase class 1 (337 aa).

Residues Glu-94, Asp-116, Leu-118, and Asp-119 each contribute to the Mg(2+) site. Residues 119-122 (DGSS), Asn-210, and Lys-276 each bind substrate. Residue Glu-282 coordinates Mg(2+).

The protein belongs to the FBPase class 1 family. In terms of assembly, homotetramer. The cofactor is Mg(2+).

The protein resides in the cytoplasm. It carries out the reaction beta-D-fructose 1,6-bisphosphate + H2O = beta-D-fructose 6-phosphate + phosphate. It participates in carbohydrate biosynthesis; gluconeogenesis. This chain is Fructose-1,6-bisphosphatase class 1, found in Burkholderia multivorans (strain ATCC 17616 / 249).